The primary structure comprises 464 residues: Kynureninase (464 aa).

Met1 carries the N-acetylmethionine modification. Pyridoxal 5'-phosphate is bound by residues Leu137, Thr138, Phe165–Asp168, Ser221, Asp250, His253, and Tyr275. Lys276 is subject to N6-(pyridoxal phosphate)lysine. Positions 305 and 333 each coordinate pyridoxal 5'-phosphate.

It belongs to the kynureninase family. Homodimer. It depends on pyridoxal 5'-phosphate as a cofactor. As to expression, high levels in liver and kidney. Also detected in heart, retina, ovary. Lung, testis and brain.

The protein resides in the cytoplasm. The protein localises to the cytosol. The enzyme catalyses L-kynurenine + H2O = anthranilate + L-alanine + H(+). The catalysed reaction is 3-hydroxy-L-kynurenine + H2O = 3-hydroxyanthranilate + L-alanine + H(+). The protein operates within amino-acid degradation; L-kynurenine degradation; L-alanine and anthranilate from L-kynurenine: step 1/1. It functions in the pathway cofactor biosynthesis; NAD(+) biosynthesis; quinolinate from L-kynurenine: step 2/3. With respect to regulation, inhibited by o-methylbenzoylalanine (OMBA). Its function is as follows. Catalyzes the cleavage of L-kynurenine (L-Kyn) and L-3-hydroxykynurenine (L-3OHKyn) into anthranilic acid (AA) and 3-hydroxyanthranilic acid (3-OHAA), respectively. Has a preference for the L-3-hydroxy form. Also has cysteine-conjugate-beta-lyase activity. The polypeptide is Kynureninase (Kynu) (Rattus norvegicus (Rat)).